The chain runs to 260 residues: UPF0246 protein BTH_I1090 (260 aa).

Belongs to the UPF0246 family.

The protein is UPF0246 protein BTH_I1090 of Burkholderia thailandensis (strain ATCC 700388 / DSM 13276 / CCUG 48851 / CIP 106301 / E264).